The following is a 231-amino-acid chain: Secreted LysM effector LysM13 (231 aa).

The N-terminal stretch at 1–19 (MVFLSLKYALSGLAATAAA) is a signal peptide. N-linked (GlcNAc...) asparagine glycans are attached at residues Asn-30, Asn-34, Asn-77, Asn-100, Asn-130, Asn-201, and Asn-226. A LysM domain is found at 38-82 (TTYTTTSEDTIFTVARKFDRGPCDIARYNRMIDAEHIFANFTLRI).

The protein belongs to the secreted LysM effector family.

It localises to the secreted. Its function is as follows. Secreted LysM effector that might have a role in sequestration of chitin oligosaccharides (breakdown products of fungal cell walls that are released during invasion and act as triggers of host immunity) to dampen host defense. The protein is Secreted LysM effector LysM13 of Penicillium expansum (Blue mold rot fungus).